Reading from the N-terminus, the 131-residue chain is Small ribosomal subunit protein uS12 (131 aa).

The segment at 1–32 (MPTFSQLVRKGRTAPRYKTASPALQGSPQRRG) is disordered. Residue Asp89 is modified to 3-methylthioaspartic acid. The interval 110–131 (RKQGRSKYGAKRAKGGAAAGKK) is disordered. The segment covering 111 to 131 (KQGRSKYGAKRAKGGAAAGKK) has biased composition (basic residues).

It belongs to the universal ribosomal protein uS12 family. Part of the 30S ribosomal subunit. Contacts proteins S8 and S17. May interact with IF1 in the 30S initiation complex.

In terms of biological role, with S4 and S5 plays an important role in translational accuracy. Its function is as follows. Interacts with and stabilizes bases of the 16S rRNA that are involved in tRNA selection in the A site and with the mRNA backbone. Located at the interface of the 30S and 50S subunits, it traverses the body of the 30S subunit contacting proteins on the other side and probably holding the rRNA structure together. The combined cluster of proteins S8, S12 and S17 appears to hold together the shoulder and platform of the 30S subunit. The sequence is that of Small ribosomal subunit protein uS12 from Acidobacterium capsulatum (strain ATCC 51196 / DSM 11244 / BCRC 80197 / JCM 7670 / NBRC 15755 / NCIMB 13165 / 161).